The primary structure comprises 130 residues: Small ribosomal subunit protein uS11 (130 aa).

This sequence belongs to the universal ribosomal protein uS11 family. In terms of assembly, part of the 30S ribosomal subunit. Interacts with proteins S7 and S18. Binds to IF-3.

Its function is as follows. Located on the platform of the 30S subunit, it bridges several disparate RNA helices of the 16S rRNA. Forms part of the Shine-Dalgarno cleft in the 70S ribosome. In Syntrophus aciditrophicus (strain SB), this protein is Small ribosomal subunit protein uS11.